The primary structure comprises 526 residues: Acetyl-CoA hydrolase (526 aa).

Residue T2 is modified to N-acetylthreonine. Position 277 to 281 (G277 to I281) interacts with CoA. E302 acts as the 5-glutamyl coenzyme A thioester intermediate in catalysis. Position 350 is a phosphoserine (S350). CoA contacts are provided by N392 and G396.

It belongs to the acetyl-CoA hydrolase/transferase family. Monomer. Post-translationally, glycosylated; contains mannose.

Its subcellular location is the cytoplasm. It catalyses the reaction acetyl-CoA + H2O = acetate + CoA + H(+). Presumably involved in regulating the intracellular acetyl-CoA pool for fatty acid and cholesterol synthesis and fatty acid oxidation. It may be involved in overall regulation of acetylation during melatonin synthesis. This is Acetyl-CoA hydrolase (ACH1) from Saccharomyces cerevisiae (strain ATCC 204508 / S288c) (Baker's yeast).